Consider the following 786-residue polypeptide: Endonuclease MutS2 (786 aa).

334–341 (GPNTGGKT) contacts ATP. The Smr domain maps to 711–786 (LDLRGERYEN…GNGATVVYFK (76 aa)).

This sequence belongs to the DNA mismatch repair MutS family. MutS2 subfamily. Homodimer. Binds to stalled ribosomes, contacting rRNA.

Functionally, endonuclease that is involved in the suppression of homologous recombination and thus may have a key role in the control of bacterial genetic diversity. Acts as a ribosome collision sensor, splitting the ribosome into its 2 subunits. Detects stalled/collided 70S ribosomes which it binds and splits by an ATP-hydrolysis driven conformational change. Acts upstream of the ribosome quality control system (RQC), a ribosome-associated complex that mediates the extraction of incompletely synthesized nascent chains from stalled ribosomes and their subsequent degradation. Probably generates substrates for RQC. The polypeptide is Endonuclease MutS2 (Ligilactobacillus salivarius (strain UCC118) (Lactobacillus salivarius)).